Reading from the N-terminus, the 309-residue chain is Serine/threonine-protein phosphatase 4 catalytic subunit (309 aa).

Residues D52, H54, D80, and N112 each coordinate Mn(2+). Catalysis depends on H113, which acts as the Proton donor. Mn(2+) contacts are provided by H162 and H236. L309 carries the post-translational modification Leucine methyl ester.

The protein belongs to the PPP phosphatase family. PP-4 (PP-X) subfamily. In terms of assembly, catalytic subunit of the histone H2A phosphatase complex (HTP-C) containing PPH3, PSY2 and PSY4. Mn(2+) is required as a cofactor.

It is found in the cytoplasm. The protein localises to the nucleus. The enzyme catalyses O-phospho-L-seryl-[protein] + H2O = L-seryl-[protein] + phosphate. It carries out the reaction O-phospho-L-threonyl-[protein] + H2O = L-threonyl-[protein] + phosphate. Forms the histone H2A phosphatase complex in association with the regulatory subunits PSY2 and PSY4, which dephosphorylates H2AS128ph (gamma-H2A) that has been displaced from sites of DNA lesions in the double-stranded DNA break repair process. Dephosphorylation is necessary for efficient recovery from the DNA damage checkpoint. The chain is Serine/threonine-protein phosphatase 4 catalytic subunit (PPH3) from Candida glabrata (strain ATCC 2001 / BCRC 20586 / JCM 3761 / NBRC 0622 / NRRL Y-65 / CBS 138) (Yeast).